The primary structure comprises 487 residues: Alpha-1,4-L-rhamnosidase (487 aa).

Residues Met-1–Ala-30 form the signal peptide. Catalysis depends on Glu-199, which acts as the Proton donor.

The protein belongs to the glycosyl hydrolase 39 family.

It localises to the periplasm. Its function is as follows. Alpha-rhamnosidase involved in ulvan degradation. Ulvan is the main polysaccharide component of the Ulvales (green seaweed) cell wall. It is composed of disaccharide building blocks comprising 3-sulfated rhamnose (Rha3S) linked to D-glucuronic acid (GlcA), L-iduronic acid (IduA), or D-xylose (Xyl). Endo-acting alpha-1,4-L-rhamnosidase cleaves rhamnose sections interspersed between xylose residues within the polymer, degrading larger oligomers with consecutive Xyl-Rha3S units that are resistant to the ulvan lyases and producing dimers Xyl-Rha3S and Xyl2S-Rha3S as the smallest products. In Formosa agariphila (strain DSM 15362 / KCTC 12365 / LMG 23005 / KMM 3901 / M-2Alg 35-1), this protein is Alpha-1,4-L-rhamnosidase.